The sequence spans 103 residues: Small ribosomal subunit protein uS17 (103 aa).

A disordered region spans residues 78–103 (SHSPKADKSAGSTAPAPEAAAKEVSE).

Belongs to the universal ribosomal protein uS17 family. In terms of assembly, part of the 30S ribosomal subunit.

One of the primary rRNA binding proteins, it binds specifically to the 5'-end of 16S ribosomal RNA. The protein is Small ribosomal subunit protein uS17 of Parasynechococcus marenigrum (strain WH8102).